Reading from the N-terminus, the 172-residue chain is 3-phenylpropionate/cinnamic acid dioxygenase subunit beta (172 aa).

It belongs to the bacterial ring-hydroxylating dioxygenase beta subunit family. In terms of assembly, this dioxygenase system consists of four proteins: the two subunits of the hydroxylase component (HcaE and HcaF), a ferredoxin (HcaC) and a ferredoxin reductase (HcaD).

It catalyses the reaction 3-phenylpropanoate + NADH + O2 + H(+) = 3-(cis-5,6-dihydroxycyclohexa-1,3-dien-1-yl)propanoate + NAD(+). The catalysed reaction is (E)-cinnamate + NADH + O2 + H(+) = (2E)-3-(cis-5,6-dihydroxycyclohexa-1,3-dien-1-yl)prop-2-enoate + NAD(+). It functions in the pathway aromatic compound metabolism; 3-phenylpropanoate degradation. Its function is as follows. Part of the multicomponent 3-phenylpropionate dioxygenase. Converts 3-phenylpropionic acid (PP) and cinnamic acid (CI) into 3-phenylpropionate-dihydrodiol (PP-dihydrodiol) and cinnamic acid-dihydrodiol (CI-dihydrodiol), respectively. This chain is 3-phenylpropionate/cinnamic acid dioxygenase subunit beta, found in Shigella boydii serotype 4 (strain Sb227).